The following is a 301-amino-acid chain: dTDP-4-dehydrorhamnose reductase (301 aa).

NADH-binding positions include 10–12 (GQV), Asp30, 39–40 (DF), and 63–65 (AHT). Residue 11–12 (QV) participates in NADPH binding. NADPH is bound by residues 39–40 (DF), 63–65 (AHT), and Tyr102. Residue 104 to 105 (TD) participates in dTDP-beta-L-rhamnose binding. NADH is bound by residues Tyr129 and Lys133. Residues Tyr129 and Lys133 each coordinate NADPH. The Proton donor/acceptor role is filled by Tyr129. DTDP-beta-L-rhamnose is bound at residue Trp155.

Belongs to the dTDP-4-dehydrorhamnose reductase family. As to quaternary structure, homodimer. It depends on Mg(2+) as a cofactor.

The enzyme catalyses dTDP-beta-L-rhamnose + NADP(+) = dTDP-4-dehydro-beta-L-rhamnose + NADPH + H(+). The protein operates within carbohydrate biosynthesis; dTDP-L-rhamnose biosynthesis. It functions in the pathway bacterial outer membrane biogenesis; LPS O-antigen biosynthesis. Its function is as follows. Involved in the biosynthesis of the dTDP-L-rhamnose which is an important component of lipopolysaccharide (LPS). Catalyzes the reduction of dTDP-6-deoxy-L-lyxo-4-hexulose to yield dTDP-L-rhamnose. RmlD uses NADH and NADPH nearly equally well. This is dTDP-4-dehydrorhamnose reductase from Escherichia coli.